Reading from the N-terminus, the 369-residue chain is MNASQRVRVAVVFGGRSNEHAISCVSAGSILRNLDPRRFEVVAIGITPQGSWVLTDGDPAALAISDRQLPEVTSASGTELALPADPGRSGQLVSLPPGASEVLASVDVVFPVLHGPYGEDGTIQGLLELAGVPYVGAGVFASAAGMDKEFTKKLFAAEGLPIGDYAVLRPSQSTLSLQDRERLGLPVFVKPARGGSSIGVSRVSSWDELDAAVAAARDHDPKVIVEAAIAGRELECGVLEMPDGTVQASTVGEIRVAGVRGREDSFYDFATKYLDDTAELDVPAKVDDEIADAVRELAIRAFKAVDCQGLARVDFFLTETGPVLNEINTMPGFTTISMYPRMWAASGVDYPSLLATMVETALTRGVGLR.

In terms of domain architecture, ATP-grasp spans 152 to 359 (KKLFAAEGLP…YPSLLATMVE (208 aa)). 180–235 (RERLGLPVFVKPARGGSSIGVSRVSSWDELDAAVAAARDHDPKVIVEAAIAGRELE) is a binding site for ATP. Mg(2+) contacts are provided by D314, E326, and N328.

This sequence belongs to the D-alanine--D-alanine ligase family. Mg(2+) serves as cofactor. Mn(2+) is required as a cofactor.

The protein localises to the cytoplasm. It catalyses the reaction 2 D-alanine + ATP = D-alanyl-D-alanine + ADP + phosphate + H(+). It participates in cell wall biogenesis; peptidoglycan biosynthesis. Functionally, cell wall formation. The polypeptide is D-alanine--D-alanine ligase (Mycobacterium avium (strain 104)).